Here is a 592-residue protein sequence, read N- to C-terminus: V-type ATP synthase alpha chain 2 (592 aa).

237-244 (GGFGTGKT) is a binding site for ATP.

It belongs to the ATPase alpha/beta chains family.

It catalyses the reaction ATP + H2O + 4 H(+)(in) = ADP + phosphate + 5 H(+)(out). Produces ATP from ADP in the presence of a proton gradient across the membrane. The V-type alpha chain is a catalytic subunit. This Clostridium tetani (strain Massachusetts / E88) protein is V-type ATP synthase alpha chain 2.